The sequence spans 248 residues: Tetraspanin-18 (248 aa).

Topologically, residues 1-13 (MEGDCLSCMKYLM) are cytoplasmic. Residues 14 to 34 (FVFNFFIFLGGACLLAIGIWV) traverse the membrane as a helical segment. Topologically, residues 35–49 (MVDPTGFREIVAANP) are extracellular. A helical transmembrane segment spans residues 50-70 (LLLTGAYILLAMGGLLFLLGF). At 71–83 (LGCCGAVRENKCL) the chain is on the cytoplasmic side. Residues 84-104 (LLFFFLFILIIFLAELSAAIL) traverse the membrane as a helical segment. Topologically, residues 105–223 (AFIFRENLTR…TFETYVYLAG (119 aa)) are extracellular. 2 N-linked (GlcNAc...) asparagine glycosylation sites follow: Asn-111 and Asn-129. Residues 224–244 (ALAIGVLAIELFAMIFAMCLF) form a helical membrane-spanning segment. The Cytoplasmic segment spans residues 245–248 (RGIQ).

Belongs to the tetraspanin (TM4SF) family. Interacts with ORAI1; this interaction regulates ORAI1 exit from the endoplasmic (ER), and/or Golgi, and trafficking to the cell surface. In terms of tissue distribution, highly expressed in primary endothelial cells. Expressed in the embryo heart. Weakly expressed the embryo skeletal muscle.

Its subcellular location is the membrane. Plays a role in the cell surface localization of ORAI1 and may participate in the regulation of Ca(2+) signaling and the VWF release in response to inflammatory stimuli. The chain is Tetraspanin-18 from Homo sapiens (Human).